The sequence spans 269 residues: Protein shisa-1 (269 aa).

The N-terminal stretch at 1-18 (MEFIVLLTVCALLGLSCG) is a signal peptide. Over 19 to 98 (QHGEYCHGWT…LPPTVPTYFP (80 aa)) the chain is Extracellular. Residues 99–119 (FLLVGSIFVSFVILGSLVGLC) form a helical membrane-spanning segment. The Cytoplasmic portion of the chain corresponds to 120–269 (CCKCLKPEDD…TVCSGSPSKC (150 aa)). The interval 129 to 167 (DTQVSGPAPIQSRLLDQDPSTDTSRHSSSSSASMPRPPI) is disordered. Residues 146 to 162 (DPSTDTSRHSSSSSASM) are compositionally biased toward low complexity.

The protein belongs to the shisa family. Interacts with immature forms of fzd8 and fgfr.

Its subcellular location is the endoplasmic reticulum. It localises to the membrane. Required for head formation during gastrulation. Functions as an inhibitor for the caudalizing signals wnt and fgf, does not inhibit bmp, activin and nodal signaling in head formation process. Induces retention of fzd8 in the endoplasmic reticulum and inhibits trafficking of fzd8 to the cell surface. The sequence is that of Protein shisa-1 (shisa1) from Xenopus laevis (African clawed frog).